The sequence spans 634 residues: Threonine--tRNA ligase (634 aa).

The TGS domain maps to 1-61 (MINIRFPDGS…NSNCELRLIT (61 aa)). Positions 241–532 (DHRKIGKVLD…LIEHYAGNLP (292 aa)) are catalytic. Cys-332, His-383, and His-509 together coordinate Zn(2+).

This sequence belongs to the class-II aminoacyl-tRNA synthetase family. As to quaternary structure, homodimer. Requires Zn(2+) as cofactor.

Its subcellular location is the cytoplasm. It catalyses the reaction tRNA(Thr) + L-threonine + ATP = L-threonyl-tRNA(Thr) + AMP + diphosphate + H(+). Functionally, catalyzes the attachment of threonine to tRNA(Thr) in a two-step reaction: L-threonine is first activated by ATP to form Thr-AMP and then transferred to the acceptor end of tRNA(Thr). Also edits incorrectly charged L-seryl-tRNA(Thr). The sequence is that of Threonine--tRNA ligase from Francisella tularensis subsp. tularensis (strain FSC 198).